The primary structure comprises 1085 residues: KN motif and ankyrin repeat domain-containing protein 2 (1085 aa).

Over residues Lys-136–Arg-145 the composition is skewed to basic and acidic residues. The interval Lys-136–Thr-192 is disordered. Composition is skewed to polar residues over residues Asn-148–Arg-171 and Thr-179–Val-189. Positions Leu-196 to Gln-216 form a coiled coil. Residues Asn-273 to Asp-295 are disordered. Polar residues predominate over residues Ala-281–Asp-295. Residues Val-356–Glu-383 are a coiled coil. 3 disordered regions span residues Arg-557–Gln-736, Thr-752–Gln-791, and Thr-798–Leu-817. Over residues Ser-589 to Ala-600 the composition is skewed to acidic residues. Over residues Ser-601–Pro-611 the composition is skewed to basic and acidic residues. Residues Ala-614–His-648 are compositionally biased toward polar residues. Low complexity predominate over residues Thr-649–His-668. Polar residues-rich tracts occupy residues Asn-706–Gln-736 and Ser-760–Ser-788. Positions Thr-798–Thr-810 are enriched in low complexity. 5 ANK repeats span residues Asn-895–Lys-925, Ala-929–Ala-962, Ala-967–Leu-996, Asp-1000–Leu-1030, and Asp-1034–Pro-1063. The disordered stretch occupies residues Pro-1064–Lys-1085. A compositionally biased stretch (low complexity) spans Lys-1070 to Lys-1085.

It localises to the cytoplasm. Its subcellular location is the mitochondrion. May be involved in different biological processes including transcription and apoptosis by sequestering specific proteins outside of the nucleus. Involved in actin stress fibers formation probably through its interaction with ARHGDIA and the regulation of the Rho signaling pathway. May thereby play a role in cell adhesion and migration, regulating for instance podocytes migration during development of the kidney. The sequence is that of KN motif and ankyrin repeat domain-containing protein 2 (kank2) from Danio rerio (Zebrafish).